The chain runs to 501 residues: L-ornithine N(5)-monooxygenase (501 aa).

Positions 1-31 are disordered; it reads MESVERKSESSYLGMRNMQPEQRLSLDPPRL. FAD is bound by residues 83–91 and Gln-102; that span reads ERQKQFAWH. Lys-107 contributes to the substrate binding site. Val-168 contacts FAD. NADP(+)-binding positions include 254–257 and Arg-279; that span reads SGQS. Residues 293–296 and Asn-323 contribute to the substrate site; that span reads NEIF. 323–325 serves as a coordination point for NADP(+); the sequence is NYS. The segment at 366–390 is disordered; that stretch reads EHHGPQSRMRIHLKSSKPESEGAAN. The span at 381–390 shows a compositional bias: basic and acidic residues; it reads SKPESEGAAN. 466–468 serves as a coordination point for FAD; it reads SLL. A substrate-binding site is contributed by Ser-469.

Belongs to the lysine N(6)-hydroxylase/L-ornithine N(5)-oxygenase family. Homotetramer. FAD is required as a cofactor.

The enzyme catalyses L-ornithine + NADPH + O2 = N(5)-hydroxy-L-ornithine + NADP(+) + H2O. The catalysed reaction is L-ornithine + NADH + O2 = N(5)-hydroxy-L-ornithine + NAD(+) + H2O. The protein operates within siderophore biosynthesis; ferrichrome biosynthesis. L-ornithine N(5)-monooxygenase; part of the siderophore biosynthetic pathway. Aspergillus fumigatus produces four types of siderophores, low-molecular-mass iron chelators, including excreted fusarinine C (FsC) and triacetylfusarinine C (TAFC) for iron uptake; and intacellular ferricrocin (FC) for hyphal and hydroxyferricrocin (HFC) for conidial iron distribution and storage. TAFC consists of three N(2)-acetyl-N(5)-anhydromevalonyl-N(5)-hydroxyornithine residues cyclically linked by ester bonds; FC is a cyclic hexapeptide with the structure Gly-Ser-Gly-(N(5)-acetyl-N(5)-hydroxyornithine)x3. The biosynthesis of all four siderophores depends on the hydroxylation of ornithine, catalyzed by the monooxygenase sidA. SidA is highly specific for its substrate, only hydrolyzing l-ornithine, and has preference for NADPH over NADH, NADPH playing a role in stabilization of the C4a-hydroperoxyflavin intermediate. Subsequently, the pathways for biosynthesis of extra- and intracellular siderophores split. For biosynthesis of extracellular siderophores, the transacylase sidF transfers anhydromevalonyl to N(5)-hydroxyornithine. The required anhydromevalonyl-CoA moiety is derived from mevalonate by CoA ligation and dehydration catalyzed by sidI and sidH respectively. The acetylation of N(5)-hydroxyornithine for FC biosynthesis involves the constitutively expressed sidL. FC is hydroxylated to HFC by an as yet uncharacterized enzyme during conidiation. Assembly of fusarinine C (FsC) and FC is catalyzed by two different nonribosomal peptide synthetases (NRPS), sidD and sidC respectively. Subsequently, sidG catalyzes N2-acetylation of FsC for forming TAFC. Both extra- and intracellular siderophores are crucial for growth during iron limitation and virulence. The protein is L-ornithine N(5)-monooxygenase of Aspergillus fumigatus (strain ATCC MYA-4609 / CBS 101355 / FGSC A1100 / Af293) (Neosartorya fumigata).